The primary structure comprises 209 residues: High frequency lysogenization protein HflD homolog (209 aa).

Belongs to the HflD family.

It is found in the cytoplasm. It localises to the cell inner membrane. The chain is High frequency lysogenization protein HflD homolog from Saccharophagus degradans (strain 2-40 / ATCC 43961 / DSM 17024).